A 254-amino-acid polypeptide reads, in one-letter code: Phosphoribosylaminoimidazole-succinocarboxamide synthase (254 aa).

This sequence belongs to the SAICAR synthetase family.

The enzyme catalyses 5-amino-1-(5-phospho-D-ribosyl)imidazole-4-carboxylate + L-aspartate + ATP = (2S)-2-[5-amino-1-(5-phospho-beta-D-ribosyl)imidazole-4-carboxamido]succinate + ADP + phosphate + 2 H(+). It functions in the pathway purine metabolism; IMP biosynthesis via de novo pathway; 5-amino-1-(5-phospho-D-ribosyl)imidazole-4-carboxamide from 5-amino-1-(5-phospho-D-ribosyl)imidazole-4-carboxylate: step 1/2. The protein is Phosphoribosylaminoimidazole-succinocarboxamide synthase of Brucella anthropi (strain ATCC 49188 / DSM 6882 / CCUG 24695 / JCM 21032 / LMG 3331 / NBRC 15819 / NCTC 12168 / Alc 37) (Ochrobactrum anthropi).